Reading from the N-terminus, the 420-residue chain is Tyrosine--tRNA ligase (420 aa).

An L-tyrosine-binding site is contributed by Tyr38. The short motif at 43–52 (PTGDSLHIGH) is the 'HIGH' region element. 2 residues coordinate L-tyrosine: Tyr169 and Gln173. Positions 231-235 (KFGKS) match the 'KMSKS' region motif. Lys234 serves as a coordination point for ATP. The S4 RNA-binding domain maps to 353 to 419 (KNLVDFLVDT…GKRKYTLVTI (67 aa)).

The protein belongs to the class-I aminoacyl-tRNA synthetase family. TyrS type 1 subfamily. Homodimer.

The protein resides in the cytoplasm. It catalyses the reaction tRNA(Tyr) + L-tyrosine + ATP = L-tyrosyl-tRNA(Tyr) + AMP + diphosphate + H(+). Catalyzes the attachment of tyrosine to tRNA(Tyr) in a two-step reaction: tyrosine is first activated by ATP to form Tyr-AMP and then transferred to the acceptor end of tRNA(Tyr). This chain is Tyrosine--tRNA ligase, found in Lactobacillus helveticus (strain DPC 4571).